Reading from the N-terminus, the 350-residue chain is Nicotinate-nucleotide--dimethylbenzimidazole phosphoribosyltransferase (350 aa).

Catalysis depends on Glu-316, which acts as the Proton acceptor.

Belongs to the CobT family.

The catalysed reaction is 5,6-dimethylbenzimidazole + nicotinate beta-D-ribonucleotide = alpha-ribazole 5'-phosphate + nicotinate + H(+). It functions in the pathway nucleoside biosynthesis; alpha-ribazole biosynthesis; alpha-ribazole from 5,6-dimethylbenzimidazole: step 1/2. Functionally, catalyzes the synthesis of alpha-ribazole-5'-phosphate from nicotinate mononucleotide (NAMN) and 5,6-dimethylbenzimidazole (DMB). In Pseudomonas syringae pv. syringae (strain B728a), this protein is Nicotinate-nucleotide--dimethylbenzimidazole phosphoribosyltransferase.